The following is a 146-amino-acid chain: Small ribosomal subunit protein uS5 (146 aa).

Residues 8 to 71 (FEEVIVNIGR…DDAFKNIIDV (64 aa)) enclose the S5 DRBM domain.

It belongs to the universal ribosomal protein uS5 family. In terms of assembly, part of the 30S ribosomal subunit. Contacts proteins S4 and S8.

Its function is as follows. With S4 and S12 plays an important role in translational accuracy. Located at the back of the 30S subunit body where it stabilizes the conformation of the head with respect to the body. This Campylobacter hominis (strain ATCC BAA-381 / DSM 21671 / CCUG 45161 / LMG 19568 / NCTC 13146 / CH001A) protein is Small ribosomal subunit protein uS5.